A 754-amino-acid chain; its full sequence is ATP-dependent zinc metalloprotease FtsH (754 aa).

The Cytoplasmic portion of the chain corresponds to 1–9; sequence MKQRMKKPS. A helical membrane pass occupies residues 10 to 30; sequence LGTFILILILIGILAYVLWQF. Residues 31–186 lie on the Extracellular side of the membrane; it reads LSPKLGYKSL…FDRPRGNFLS (156 aa). Residues 187-207 traverse the membrane as a helical segment; it reads SFIVPYIPFLLISLFGFWLFF. Residues 208–754 are Cytoplasmic-facing; sequence RLSQNSQAGG…ESKIDSSKEQ (547 aa). 277-284 provides a ligand contact to ATP; that stretch reads GPPGTGKT. His-499 contributes to the Zn(2+) binding site. Glu-500 is a catalytic residue. Zn(2+)-binding residues include His-503 and Asp-577. The segment at 713 to 754 is disordered; it reads QEKSYENEDQNQNSLEAINYNIDDQDDDKNDSESKIDSSKEQ. Residues 743-754 show a composition bias toward basic and acidic residues; that stretch reads DSESKIDSSKEQ.

The protein in the central section; belongs to the AAA ATPase family. In the C-terminal section; belongs to the peptidase M41 family. Homohexamer. Zn(2+) serves as cofactor.

It is found in the cell membrane. In terms of biological role, acts as a processive, ATP-dependent zinc metallopeptidase for both cytoplasmic and membrane proteins. Plays a role in the quality control of integral membrane proteins. This chain is ATP-dependent zinc metalloprotease FtsH, found in Mesomycoplasma conjunctivae (strain ATCC 25834 / NCTC 10147 / HRC/581) (Mycoplasma conjunctivae).